The sequence spans 171 residues: Ribosome maturation factor RimM (171 aa).

Positions 96 to 168 (EDGFYDHELE…TATITPPEGL (73 aa)) constitute a PRC barrel domain.

The protein belongs to the RimM family. In terms of assembly, binds ribosomal protein uS19.

The protein localises to the cytoplasm. An accessory protein needed during the final step in the assembly of 30S ribosomal subunit, possibly for assembly of the head region. Essential for efficient processing of 16S rRNA. May be needed both before and after RbfA during the maturation of 16S rRNA. It has affinity for free ribosomal 30S subunits but not for 70S ribosomes. The polypeptide is Ribosome maturation factor RimM (Corynebacterium glutamicum (strain ATCC 13032 / DSM 20300 / JCM 1318 / BCRC 11384 / CCUG 27702 / LMG 3730 / NBRC 12168 / NCIMB 10025 / NRRL B-2784 / 534)).